A 521-amino-acid chain; its full sequence is Cyclic AMP-responsive element-binding protein 3-like protein 2 (521 aa).

The Cytoplasmic segment spans residues Met-1–Thr-378. Positions Tyr-83–Ser-103 are enriched in polar residues. Positions Tyr-83–Asp-106 are disordered. Ser-93 is subject to Phosphoserine. Lys-178 is covalently cross-linked (Glycyl lysine isopeptide (Lys-Gly) (interchain with G-Cter in SUMO2)). Ser-191 bears the Phosphoserine mark. The segment at Ser-196 to Leu-264 is disordered. Residues Ser-208–Pro-220 show a composition bias toward low complexity. One can recognise a bZIP domain in the interval Ala-294–Leu-357. Residues Lys-296 to Lys-325 form a basic motif region. The segment at Leu-336–Leu-357 is leucine-zipper. The helical; Signal-anchor for type II membrane protein transmembrane segment at Cys-379–Gly-399 threads the bilayer. Residues Pro-400–Phe-521 are Lumenal-facing. The S1P recognition signature appears at Arg-427–Leu-430. Residues Asn-481, Asn-505, and Asn-518 are each glycosylated (N-linked (GlcNAc...) asparagine).

It belongs to the bZIP family. ATF subfamily. Binds DNA as a dimer. In terms of processing, upon ER stress, translocated to the Golgi apparatus, where it is processed by regulated intramembrane proteolysis (RIP) to release the cytosol-facing N-terminal transcription factor domain. The cleavage is performed sequentially by site-1 and site-2 proteases (S1P/MBTPS1 and S2P/MBTPS2). N-glycosylated. Post-translationally, ubiquitinated by HRD1/SYVN1; undergoes 'Lys-48'-linked ubiquitination, followed by rapid proteasomal degradation under normal conditions. Upon ER stress, SYVN1 E3 ubiquitin-protein ligase dissociates from its substrate, ubiquitination does not occur and CREB3L2 is stabilized. As to expression, widely expressed, including in lung, bladder, ovary, testis and spleen. Highly expressed in chondrocytes.

It is found in the endoplasmic reticulum membrane. The protein resides in the nucleus. Transcription factor involved in unfolded protein response (UPR). In the absence of endoplasmic reticulum (ER) stress, inserted into ER membranes, with N-terminal DNA-binding and transcription activation domains oriented toward the cytosolic face of the membrane. In response to ER stress, transported to the Golgi, where it is cleaved in a site-specific manner by resident proteases S1P/MBTPS1 and S2P/MBTPS2. The released N-terminal cytosolic domain is translocated to the nucleus to effect transcription of specific target genes. Plays a critical role in chondrogenesis by activating the transcription of SEC23A, which promotes the transport and secretion of cartilage matrix proteins, and possibly that of ER biogenesis-related genes. In a neuroblastoma cell line, protects cells from ER stress-induced death. In vitro activates transcription of target genes via direct binding to the CRE site. The sequence is that of Cyclic AMP-responsive element-binding protein 3-like protein 2 (Creb3l2) from Mus musculus (Mouse).